The following is a 93-amino-acid chain: Putative septation protein SpoVG (93 aa).

It belongs to the SpoVG family.

Could be involved in septation. The sequence is that of Putative septation protein SpoVG from Treponema denticola (strain ATCC 35405 / DSM 14222 / CIP 103919 / JCM 8153 / KCTC 15104).